A 547-amino-acid polypeptide reads, in one-letter code: 4-coumarate-CoA ligase 1 (547 aa).

ATP contacts are provided by residues 190–194 (SSGTT), H238, 310–312 (AAP), 332–333 (QG), T337, D421, R436, and K527. The SBD1 stretch occupies residues 263–332 (EIVRLMELVE…EKLPNAKLGQ (70 aa)). The interval 333–400 (GYGMTEAGPV…IRGNQIMKGY (68 aa)) is SBD2.

The protein belongs to the ATP-dependent AMP-binding enzyme family. As to expression, mostly expressed in stems, and, to a lower extent, in bulbs.

The catalysed reaction is (E)-4-coumarate + ATP + CoA = (E)-4-coumaroyl-CoA + AMP + diphosphate. The protein operates within phytoalexin biosynthesis; 3,4',5-trihydroxystilbene biosynthesis; 3,4',5-trihydroxystilbene from trans-4-coumarate: step 1/2. In terms of biological role, produces CoA thioesters of a variety of hydroxy- and methoxy-substituted cinnamic acids, which are used to synthesize several phenylpropanoid-derived compounds, including anthocyanins, flavonoids, isoflavonoids, coumarins, lignin, suberin and wall-bound phenolics. In Narcissus pseudonarcissus (Daffodil), this protein is 4-coumarate-CoA ligase 1.